The chain runs to 468 residues: Tripartite motif-containing protein 75 (468 aa).

The segment at 16–57 adopts an RING-type zinc-finger fold; that stretch reads CSICLDYLSDPVTIECGHNFCRSCIQQSWLDLQELFPCPVCR. The B box-type zinc finger occupies 92–133; it reads EETTLCEKHNQPLSVFCKEDLMVLCPLCTQPPDHQGHHVRPI. 4 residues coordinate Zn(2+): C97, H100, C119, and H125. A coiled-coil region spans residues 170–222; the sequence is LELREMVENQRQELSSEFEHLNQFLDREQQAVLSRLAEEEKDNQQKLSANITA. A B30.2/SPRY domain is found at 276 to 468; sequence CSFPPQYSAL…LRICTGTVCE (193 aa).

This sequence belongs to the TRIM/RBCC family.

The protein resides in the cytoplasm. The protein localises to the cytoskeleton. It is found in the spindle. Functionally, may play a role in female meiosis. This is Tripartite motif-containing protein 75 from Homo sapiens (Human).